Here is a 596-residue protein sequence, read N- to C-terminus: Pentatricopeptide repeat-containing protein At1g80270, mitochondrial (596 aa).

The N-terminal 69 residues, 1–69, are a transit peptide targeting the mitochondrion; it reads MFALSKVLRR…RALSSSAGTK (69 aa). Positions 62-119 are disordered; the sequence is LSSSAGTKSDQEEDDLEDGFSELEGSKSGQGSTSSDEDEGKLSADEEEEEELDLIETD. Acidic residues-rich tracts occupy residues 72–82 and 96–117; these read QEEDDLEDGFS and SDED…DLIE. 9 PPR repeats span residues 228–262, 263–296, 297–331, 332–366, 367–397, 399–433, 434–468, 469–503, and 505–539; these read GEVL…GFPL, SGFT…NIKP, SLLT…GVEL, DFQT…SLEA, NRRA…CESK, YFEE…DRRA, SSST…GCRI, EATT…SHTK, and MMNS…GYTS.

This sequence belongs to the PPR family. P subfamily.

It localises to the mitochondrion. The sequence is that of Pentatricopeptide repeat-containing protein At1g80270, mitochondrial from Arabidopsis thaliana (Mouse-ear cress).